Consider the following 107-residue polypeptide: Early E3A 12.5 kDa protein (107 aa).

It belongs to the adenoviridae E3A-2 family.

This is Early E3A 12.5 kDa protein from Homo sapiens (Human).